The sequence spans 461 residues: Ornithine decarboxylase (461 aa).

Position 69 is an N6-(pyridoxal phosphate)lysine (Lys69). Pyridoxal 5'-phosphate-binding positions include Ser200, Gly237, and 274–277 (EPGR). Position 303 is a phosphoserine; by CK2 (Ser303). 331-332 (YD) lines the substrate pocket. Cys360 (proton donor; shared with dimeric partner) is an active-site residue. S-nitrosocysteine; in inhibited form is present on Cys360. Asp361 provides a ligand contact to substrate. Tyr389 lines the pyridoxal 5'-phosphate pocket.

Belongs to the Orn/Lys/Arg decarboxylase class-II family. As to quaternary structure, homodimer. Only the dimer is catalytically active, as the active sites are constructed of residues from both monomers. Does not form a heterodimer with AZIN2. Pyridoxal 5'-phosphate serves as cofactor. S-Nitrosylation inhibits the enzyme. S-Nitrosylated in vitro on 4 cysteine residues.

It carries out the reaction L-ornithine + H(+) = putrescine + CO2. It participates in amine and polyamine biosynthesis; putrescine biosynthesis via L-ornithine pathway; putrescine from L-ornithine: step 1/1. Inhibited by S-nitrosylation. Inhibited by antizymes (AZs) OAZ1, OAZ2 and OAZ3 in response to polyamine levels. AZs inhibit the assembly of the functional homodimer by binding to ODC monomers. Additionally, OAZ1 targets ODC monomers for ubiquitin-independent proteolytic destruction by the 26S proteasome. Inhibited by 1-amino-oxy-3-aminopropane (APA, an isosteric analog of putrescine). Irreversibly inhibited by alpha-difluoromethylornithine (DFMO). Functionally, catalyzes the first and rate-limiting step of polyamine biosynthesis that converts ornithine into putrescine, which is the precursor for the polyamines, spermidine and spermine. Polyamines are essential for cell proliferation and are implicated in cellular processes, ranging from DNA replication to apoptosis. The protein is Ornithine decarboxylase (ODC1) of Homo sapiens (Human).